We begin with the raw amino-acid sequence, 34 residues long: Brevinin-2GHa (34 aa).

A disulfide bridge connects residues cysteine 27 and cysteine 33.

Expressed by the skin glands.

The protein resides in the secreted. Antimicrobial peptide. Active against the Gram-positive bacteria S.aureus FDA209P (MIC=14.9 ug/ml) and B.subtilis ATCC 6633 (MIC&gt;64 ug/ml), but not active against the Gram-negative bacterium E.coli or the fungus C.albicans. This Sylvirana guentheri (Gunther's frog) protein is Brevinin-2GHa.